The chain runs to 620 residues: Glutathione-regulated potassium-efflux system protein KefC (620 aa).

12 consecutive transmembrane segments (helical) span residues His4 to Val24, Leu26 to Leu46, Ser54 to Leu74, Gly90 to Leu110, Val114 to Met134, Phe149 to Leu169, Met178 to Leu198, Val218 to Gly238, Gly270 to Leu290, Leu294 to Ile314, Trp327 to Gln347, and Ser359 to Asn379. Positions Gln399–Thr518 constitute an RCK N-terminal domain. The disordered stretch occupies residues Gly597–Ser620.

The protein belongs to the monovalent cation:proton antiporter 2 (CPA2) transporter (TC 2.A.37) family. KefC subfamily. As to quaternary structure, homodimer. Interacts with the regulatory subunit KefF.

Its subcellular location is the cell inner membrane. Functionally, pore-forming subunit of a potassium efflux system that confers protection against electrophiles. Catalyzes K(+)/H(+) antiport. The polypeptide is Glutathione-regulated potassium-efflux system protein KefC (Shigella sonnei (strain Ss046)).